The following is a 489-amino-acid chain: Cytochrome P450 monooxygenase ataF (489 aa).

A helical membrane pass occupies residues 12 to 32 (WLEHSAVIATLFAFGTALFLV). N289 carries N-linked (GlcNAc...) asparagine glycosylation. Heme is bound at residue C434.

Belongs to the cytochrome P450 family. Requires heme as cofactor.

The protein localises to the membrane. It functions in the pathway mycotoxin biosynthesis. Cytochrome P450 monooxygenase; part of the gene cluster that mediates the biosynthesis of acetylaranotin, a member of the epipolythiodioxopiperazine (ETP) class of toxins characterized by a disulfide-bridged cyclic dipeptide. The first step of acetylaranotin biosynthesis is performed by the NRPS ataP which produces diketopiperazine cyclo-L-Phe-L-Phe via the condensation of 2 phenylalanines (L-Phe). The ataC domain of ataTC then catalyzes the formation of bishydroxylation of cyclo-L-Phe-L-Phe. The glutathione S-transferase domain ataG in ataIMG further catalyzes the conjugation of two glutathiones to the bishydroxylated intermediate. Next, the dipeptidase ataJ removes the Glu residues. The following step is performed by the carbon sulfur lyase domain ataI of ataIMG which may convert the bis-cysteinyl adduct to yield an epidithiol intermediate. The ataT domain from ataTC then catalyzes the oxidation of the free dithiols, followed by a cyclization step catalyzed by the cytochrome P450 ataF. AtaF probably acts as an epoxidase to promote a dual epoxidation formation at C8 and C9 along with C8' and C9', followed by the spontaneous nucleophilic attack of the amide nitrogens N10 and N10' to yield an intermediate with the pyrrolidine partial structure. The final steps of acetylaranotin biosynthesis involve the acetylation and ring rearrangement of an epitetrathiodiketopiperazine intermediate to produce acetylaranotin. AtaH probably catalyzes the acetylation of epitetrathiodiketopiperazine to produce a diacetate and ataY is responsible for the formation of the dihydrooxepin moiety that converts the diacetate intermediate to acetylaranotin via acetylapoaranotin. Both enzymes could function independently in the absence of the other. The acetylaranotin bis-thiomethyltransferase ataS located outside of acetylaranotin gene cluster is the main thiomethyltransferase responsible for converting acetylaranotin and its related intermediates to their methylated forms. The polypeptide is Cytochrome P450 monooxygenase ataF (Aspergillus terreus (strain NIH 2624 / FGSC A1156)).